We begin with the raw amino-acid sequence, 195 residues long: Holliday junction branch migration complex subunit RuvA (195 aa).

The domain I stretch occupies residues 1–64; the sequence is MIGRIAGLLL…EDAHLLFGFM (64 aa). The domain II stretch occupies residues 65 to 140; sequence TEPERVLFRQ…KISPAITLPE (76 aa). A flexible linker region spans residues 140–144; that stretch reads ETGTA. The tract at residues 145–195 is domain III; it reads MASSTDKDILNALSALGYNDREANWAVGQLSEGVTVSDGIMQSLRLLSKAK.

This sequence belongs to the RuvA family. As to quaternary structure, homotetramer. Forms an RuvA(8)-RuvB(12)-Holliday junction (HJ) complex. HJ DNA is sandwiched between 2 RuvA tetramers; dsDNA enters through RuvA and exits via RuvB. An RuvB hexamer assembles on each DNA strand where it exits the tetramer. Each RuvB hexamer is contacted by two RuvA subunits (via domain III) on 2 adjacent RuvB subunits; this complex drives branch migration. In the full resolvosome a probable DNA-RuvA(4)-RuvB(12)-RuvC(2) complex forms which resolves the HJ.

It localises to the cytoplasm. In terms of biological role, the RuvA-RuvB-RuvC complex processes Holliday junction (HJ) DNA during genetic recombination and DNA repair, while the RuvA-RuvB complex plays an important role in the rescue of blocked DNA replication forks via replication fork reversal (RFR). RuvA specifically binds to HJ cruciform DNA, conferring on it an open structure. The RuvB hexamer acts as an ATP-dependent pump, pulling dsDNA into and through the RuvAB complex. HJ branch migration allows RuvC to scan DNA until it finds its consensus sequence, where it cleaves and resolves the cruciform DNA. The polypeptide is Holliday junction branch migration complex subunit RuvA (Nitrosomonas europaea (strain ATCC 19718 / CIP 103999 / KCTC 2705 / NBRC 14298)).